Consider the following 439-residue polypeptide: Tol-Pal system protein TolB (439 aa).

Residues 1 to 22 (MKKPLRWLAALTVLLLPLSALA) form the signal peptide.

The protein belongs to the TolB family. The Tol-Pal system is composed of five core proteins: the inner membrane proteins TolA, TolQ and TolR, the periplasmic protein TolB and the outer membrane protein Pal. They form a network linking the inner and outer membranes and the peptidoglycan layer.

It is found in the periplasm. Its function is as follows. Part of the Tol-Pal system, which plays a role in outer membrane invagination during cell division and is important for maintaining outer membrane integrity. This chain is Tol-Pal system protein TolB, found in Xanthomonas oryzae pv. oryzae (strain KACC10331 / KXO85).